The following is a 513-amino-acid chain: ETS translocation variant 3 (513 aa).

A DNA-binding region (ETS) is located at residues 35–116 (IQLWHFILEL…KGKRFTYKFN (82 aa)). Positions 138 to 202 (QSAPPVPTAS…DLEDGSASDW (65 aa)) are disordered. 3 positions are modified to phosphoserine: Ser139, Ser159, and Ser315. The tract at residues 333-513 (QMHPEEPSQF…ATTATAAADA (181 aa)) is disordered. Basic and acidic residues-rich tracts occupy residues 357 to 366 (ERVESREEAV), 380 to 392 (IKVEPATEKDPDS), and 399 to 419 (GKEEQTQEVDSMRSRTIEEGK). Lys381 is covalently cross-linked (Glycyl lysine isopeptide (Lys-Gly) (interchain with G-Cter in SUMO2)). Lys388 is subject to N6-acetyllysine; alternate. Lys388 participates in a covalent cross-link: Glycyl lysine isopeptide (Lys-Gly) (interchain with G-Cter in SUMO2); alternate. A compositionally biased stretch (polar residues) spans 430 to 439 (WPSVSISTPS). A compositionally biased stretch (acidic residues) spans 441–450 (EPLEGTEDSE). Composition is skewed to basic and acidic residues over residues 451 to 466 (DRSVREPGVPEKKEDA) and 477 to 489 (RWNDDPEARELNK). The segment covering 504–513 (ATTATAAADA) has biased composition (low complexity).

Belongs to the ETS family.

It localises to the nucleus. In terms of biological role, transcriptional repressor that contribute to growth arrest during terminal macrophage differentiation by repressing target genes involved in Ras-dependent proliferation. Represses MMP1 promoter activity. The protein is ETS translocation variant 3 (Etv3) of Mus musculus (Mouse).